The following is a 349-amino-acid chain: Isopentenyl-diphosphate delta-isomerase (349 aa).

8 to 9 (RK) contacts substrate. Residues Ser66, 67 to 69 (SMT), Ser97, and Asn125 contribute to the FMN site. 97–99 (STR) serves as a coordination point for substrate. Gln160 is a substrate binding site. Glu161 serves as a coordination point for Mg(2+). FMN is bound by residues Lys192, Thr222, 272-274 (GMK), and 293-294 (AR).

Belongs to the IPP isomerase type 2 family. In terms of assembly, homooctamer. Dimer of tetramers. The cofactor is FMN. NADPH is required as a cofactor. It depends on Mg(2+) as a cofactor.

Its subcellular location is the cytoplasm. The catalysed reaction is isopentenyl diphosphate = dimethylallyl diphosphate. Involved in the biosynthesis of isoprenoids. Catalyzes the 1,3-allylic rearrangement of the homoallylic substrate isopentenyl (IPP) to its allylic isomer, dimethylallyl diphosphate (DMAPP). The polypeptide is Isopentenyl-diphosphate delta-isomerase (Oceanobacillus iheyensis (strain DSM 14371 / CIP 107618 / JCM 11309 / KCTC 3954 / HTE831)).